Reading from the N-terminus, the 217-residue chain is Uridylate kinase (217 aa).

6–10 (KLSGR) serves as a coordination point for ATP. Residue Gly-38 coordinates UMP. ATP-binding residues include Gly-39 and Arg-43. Residues Asp-60 and 107 to 113 (FQPGQST) each bind UMP. Residues Asn-134, Tyr-139, and Asp-142 each contribute to the ATP site.

This sequence belongs to the UMP kinase family. Homohexamer.

The protein localises to the cytoplasm. It catalyses the reaction UMP + ATP = UDP + ADP. Its pathway is pyrimidine metabolism; CTP biosynthesis via de novo pathway; UDP from UMP (UMPK route): step 1/1. Inhibited by UTP. In terms of biological role, catalyzes the reversible phosphorylation of UMP to UDP. The protein is Uridylate kinase of Pyrobaculum islandicum (strain DSM 4184 / JCM 9189 / GEO3).